Consider the following 474-residue polypeptide: L-arabinose isomerase (474 aa).

Residues glutamate 306, glutamate 331, histidine 348, and histidine 447 each coordinate Mn(2+).

This sequence belongs to the arabinose isomerase family. The cofactor is Mn(2+).

It carries out the reaction beta-L-arabinopyranose = L-ribulose. It functions in the pathway carbohydrate degradation; L-arabinose degradation via L-ribulose; D-xylulose 5-phosphate from L-arabinose (bacterial route): step 1/3. Its function is as follows. Catalyzes the conversion of L-arabinose to L-ribulose. This chain is L-arabinose isomerase, found in Levilactobacillus brevis (strain ATCC 367 / BCRC 12310 / CIP 105137 / JCM 1170 / LMG 11437 / NCIMB 947 / NCTC 947) (Lactobacillus brevis).